The primary structure comprises 738 residues: Melanotransferrin (738 aa).

The signal sequence occupies residues 1 to 19; it reads MRGPSGALWLLLALRTVLG. Residues 20 to 30 form an antigenic epitope region; that stretch reads GMEVRWCATSD. 2 Transferrin-like domains span residues 23 to 357 and 366 to 706; these read VRWC…GLLC and LRWC…GMSS. Intrachain disulfides connect Cys26–Cys63 and Cys36–Cys54. N-linked (GlcNAc...) asparagine glycosylation is present at Asn38. The Fe(3+) site is built by Asp78 and Tyr107. 4 cysteine pairs are disulfide-bonded: Cys130–Cys216, Cys172–Cys189, Cys186–Cys199, and Cys257–Cys271. Thr132 is a hydrogencarbonate binding site. Asn135 carries N-linked (GlcNAc...) asparagine glycosylation. Hydrogencarbonate is bound by residues Arg136, Val138, and Gly139. Residue Tyr210 coordinates Fe(3+). Fe(3+)-binding residues include His279, Ser421, and Tyr451. Ser462 carries the post-translational modification Phosphoserine; by FAM20C. Asn515 carries N-linked (GlcNAc...) asparagine glycosylation. 2 residues coordinate Fe(3+): Tyr556 and His625. Cys709 carries the GPI-anchor amidated cysteine lipid modification. Residues 710–738 constitute a propeptide, removed in mature form; the sequence is SGAAAPAPGAPLLPLLLPALAARLLPPAL.

This sequence belongs to the transferrin family. In terms of tissue distribution, found predominantly in human melanomas and in certain fetal tissues; also found in liver, epithelium, umbilical chord, placenta and sweat gland ducts.

The protein localises to the cell membrane. Its function is as follows. Involved in iron cellular uptake. Seems to be internalized and then recycled back to the cell membrane. Binds a single atom of iron per subunit. Could also bind zinc. The sequence is that of Melanotransferrin from Homo sapiens (Human).